A 626-amino-acid chain; its full sequence is Receptor-like protein 4 (626 aa).

The N-terminal stretch at 1–22 (MMLRFILASLLLSSFSLYSSLA) is a signal peptide. Topologically, residues 23-549 (RPAPYALRIS…CGPHLSSGAK (527 aa)) are extracellular. Asparagine 61, asparagine 282, asparagine 333, and asparagine 417 each carry an N-linked (GlcNAc...) asparagine glycan. LRR repeat units follow at residues 420–444 (RWFIDGLDLDNQGLKGFLPNDISKL), 445–468 (KHLQSINLSENNIRGGIPASLGSV), 470–492 (SLEVLDLSYNSFNGSIPETLGEL), and 493–516 (TSLRILNLNGNSLSGKVPAAVGGR). Residues asparagine 451 and asparagine 482 are each glycosylated (N-linked (GlcNAc...) asparagine). An N-linked (GlcNAc...) asparagine glycan is attached at asparagine 524. The helical transmembrane segment at 550 to 570 (IGIAFGVSLAFLLIVACAMIW) threads the bilayer. The Cytoplasmic segment spans residues 571–626 (WKRRQNILRAQQIAARGAPYAKKRTHVSHDIQMSRHGHNNHGQARTAVENGPSLLS). Residues 603–626 (MSRHGHNNHGQARTAVENGPSLLS) form a disordered region.

It belongs to the RLP family.

The protein localises to the cell membrane. The polypeptide is Receptor-like protein 4 (Arabidopsis thaliana (Mouse-ear cress)).